A 345-amino-acid polypeptide reads, in one-letter code: MNPLINFILLSSMIAGTILTTTSHHWVSAWLGLELNTLAIIPIISMTHHPRATEASTKYFLIQAASSALVLLSGIINAHLHGSWDISQLSDNFSKIALTTALATKLGLAPIHFWLPEILQGVPILTALIIATWQKIAPMALLIMIWDLIPTPITLIMGLTSTIVGGLGGLNQTQLRKTMAFSSIAHLGWMITMMTIAPNLTLLNLILYIPMTSLTMLIMHLTMSKTLQNAMLIPSHSLTATSLFLLSLLSLGGLPPLSGFIPKWLILQELTIHNLTPMAFMMAITALLSLMFYLRITYISTMTLPPSTTPLKNTWRFKSHQNTSTLPLLSLISIFLLPITPTLTQ.

A run of 10 helical transmembrane segments spans residues 1–21, 26–46, 60–80, 96–115, 122–144, 148–170, 201–223, 242–262, 274–294, and 323–343; these read MNPLINFILLSSMIAGTILTT, WVSAWLGLELNTLAIIPIISM, FLIQAASSALVLLSGIINAHL, IALTTALATKLGLAPIHFWL, VPILTALIIATWQKIAPMALLIM, LIPTPITLIMGLTSTIVGGLGGL, TLLNLILYIPMTSLTMLIMHLTM, SLFLLSLLSLGGLPPLSGFIP, NLTPMAFMMAITALLSLMFYL, and TSTLPLLSLISIFLLPITPTL.

Belongs to the complex I subunit 2 family.

Its subcellular location is the mitochondrion inner membrane. The enzyme catalyses a ubiquinone + NADH + 5 H(+)(in) = a ubiquinol + NAD(+) + 4 H(+)(out). In terms of biological role, core subunit of the mitochondrial membrane respiratory chain NADH dehydrogenase (Complex I) that is believed to belong to the minimal assembly required for catalysis. Complex I functions in the transfer of electrons from NADH to the respiratory chain. The immediate electron acceptor for the enzyme is believed to be ubiquinone. In Varanus nebulosus (Clouded monitor), this protein is NADH-ubiquinone oxidoreductase chain 2 (MT-ND2).